Consider the following 136-residue polypeptide: Small ribosomal subunit protein bS6 (136 aa).

Residues Glu97 to Glu128 are compositionally biased toward basic and acidic residues. The segment at Glu97–Glu136 is disordered.

It belongs to the bacterial ribosomal protein bS6 family.

Its function is as follows. Binds together with bS18 to 16S ribosomal RNA. The polypeptide is Small ribosomal subunit protein bS6 (Bartonella bacilliformis (strain ATCC 35685 / KC583 / Herrer 020/F12,63)).